Here is a 396-residue protein sequence, read N- to C-terminus: Diels-Alderase mpsD (396 aa).

Belongs to the Diels-Alderase family.

Its pathway is secondary metabolite biosynthesis. Its function is as follows. Diels-Alderase; part of the gene cluster that mediates the biosynthesis of macrophasetins, 3-decalinoyltetramic acids (DTAs) which feature a tetramate (pyrrolidine-2,4-dione) unit connected to a decalin fragment and that have potent bioactivities. The PKS-NRPS mpsA together with its associated enoylreductase partner mpsG incorporate one unit of acetyl-CoA, seven units of malonyl-CoA, and one unit of L-alanine to assemble the linear tetramic acid intermediate corresponding to the backbone of macrophasetins. Without the Diels-Alderase mpsD, the mpsA/G product can undergo the non-enzymatic intramolecular Diels-Alder (IMDA) reaction to generate both macrophasetin A and macrophasetin B. Catalyzed by mpsD, the linear tetramic acid intermediate is thoroughly converted to macrophasetin A via the endo-IMDA reaction in a regioselective and stereoselective manner. Finally, the cytochrome P450 monooxygenase mpsF catalyzes the hydroxylation at C20 to yield the end product macrophasetin C. This chain is Diels-Alderase mpsD, found in Macrophomina phaseolina (strain MS6) (Charcoal rot fungus).